A 405-amino-acid polypeptide reads, in one-letter code: tRNA N6-adenosine threonylcarbamoyltransferase, mitochondrial (405 aa).

The transit peptide at 1-19 (MAKYISNLSRIAVVRGRVS) directs the protein to the mitochondrion. A divalent metal cation contacts are provided by histidine 138 and histidine 142. Residues 160-164 (LISGG), aspartate 193, glycine 213, glutamate 217, 320-321 (SN), and threonine 348 contribute to the substrate site. Aspartate 349 lines the a divalent metal cation pocket.

This sequence belongs to the KAE1 / TsaD family. In terms of assembly, monomer. Requires a divalent metal cation as cofactor.

It localises to the mitochondrion. The enzyme catalyses L-threonylcarbamoyladenylate + adenosine(37) in tRNA = N(6)-L-threonylcarbamoyladenosine(37) in tRNA + AMP + H(+). Its function is as follows. Required for the formation of a threonylcarbamoyl group on adenosine at position 37 (t(6)A37) in mitochondrial tRNAs that read codons beginning with adenine. Probably involved in the transfer of the threonylcarbamoyl moiety of threonylcarbamoyl-AMP (TC-AMP) to the N6 group of A37. Involved in mitochondrial genome maintenance. In Xenopus tropicalis (Western clawed frog), this protein is tRNA N6-adenosine threonylcarbamoyltransferase, mitochondrial.